The following is a 447-amino-acid chain: Elongation factor 1-alpha (447 aa).

One can recognise a tr-type G domain in the interval 5-230 (KIHISIVVIG…DQINEPKRPS (226 aa)). Residues 14–21 (GHVDSGKS) form a G1 region. 14 to 21 (GHVDSGKS) contributes to the GTP binding site. An N6,N6-dimethyllysine modification is found at Lys-55. Positions 70–74 (GITID) are G2. Lys-79 carries the post-translational modification N6,N6,N6-trimethyllysine. Residues 91–94 (DAPG) form a G3 region. GTP-binding positions include 91–95 (DAPGH) and 153–156 (NKMD). The segment at 153–156 (NKMD) is G4. At Lys-187 the chain carries N6,N6,N6-trimethyllysine. The G5 stretch occupies residues 194–196 (SGF). At Lys-261 the chain carries N6-methyllysine. Glu-289 is modified (5-glutamyl glycerylphosphorylethanolamine). The residue at position 306 (Lys-306) is an N6,N6,N6-trimethyllysine. Glu-362 bears the 5-glutamyl glycerylphosphorylethanolamine mark. Position 396 is an N6,N6,N6-trimethyllysine (Lys-396).

This sequence belongs to the TRAFAC class translation factor GTPase superfamily. Classic translation factor GTPase family. EF-Tu/EF-1A subfamily.

Its subcellular location is the cytoplasm. Functionally, this protein promotes the GTP-dependent binding of aminoacyl-tRNA to the A-site of ribosomes during protein biosynthesis. In Hordeum vulgare (Barley), this protein is Elongation factor 1-alpha.